The chain runs to 206 residues: Glycerol-3-phosphate acyltransferase (206 aa).

Helical transmembrane passes span 3–23 (LSLI…VIIG), 47–67 (VLGP…GTLA), 79–99 (HSLV…SIFL), 119–139 (PLFF…TSMV), and 152–172 (ILSF…VLIF).

It belongs to the PlsY family. As to quaternary structure, probably interacts with PlsX.

It localises to the cell membrane. It carries out the reaction an acyl phosphate + sn-glycerol 3-phosphate = a 1-acyl-sn-glycero-3-phosphate + phosphate. It functions in the pathway lipid metabolism; phospholipid metabolism. Functionally, catalyzes the transfer of an acyl group from acyl-phosphate (acyl-PO(4)) to glycerol-3-phosphate (G3P) to form lysophosphatidic acid (LPA). This enzyme utilizes acyl-phosphate as fatty acyl donor, but not acyl-CoA or acyl-ACP. The polypeptide is Glycerol-3-phosphate acyltransferase (Latilactobacillus sakei subsp. sakei (strain 23K) (Lactobacillus sakei subsp. sakei)).